The chain runs to 367 residues: 2-aminoethylphosphonate--pyruvate transaminase (367 aa).

The residue at position 194 (Lys194) is an N6-(pyridoxal phosphate)lysine.

This sequence belongs to the class-V pyridoxal-phosphate-dependent aminotransferase family. PhnW subfamily. As to quaternary structure, homodimer. The cofactor is pyridoxal 5'-phosphate.

It carries out the reaction (2-aminoethyl)phosphonate + pyruvate = phosphonoacetaldehyde + L-alanine. Its function is as follows. Involved in phosphonate degradation. The sequence is that of 2-aminoethylphosphonate--pyruvate transaminase from Salmonella agona (strain SL483).